The following is a 787-amino-acid chain: Protein translocase subunit SecA (787 aa).

Residues Gln-85, 103–107 (GEGKT), and Asp-492 contribute to the ATP site.

This sequence belongs to the SecA family. As to quaternary structure, monomer and homodimer. Part of the essential Sec protein translocation apparatus which comprises SecA, SecYEG and auxiliary proteins SecDF. Other proteins may also be involved.

Its subcellular location is the cell membrane. It is found in the cytoplasm. The enzyme catalyses ATP + H2O + cellular proteinSide 1 = ADP + phosphate + cellular proteinSide 2.. In terms of biological role, part of the Sec protein translocase complex. Interacts with the SecYEG preprotein conducting channel. Has a central role in coupling the hydrolysis of ATP to the transfer of proteins into and across the cell membrane, serving as an ATP-driven molecular motor driving the stepwise translocation of polypeptide chains across the membrane. This Lacticaseibacillus casei (strain BL23) (Lactobacillus casei) protein is Protein translocase subunit SecA.